A 279-amino-acid polypeptide reads, in one-letter code: MAIKSYKPTTPSRRFYTNVENNDITSKPSVRSLLVKLPASAGRNNNGRITSRHREAGAKKLYRIIDFKRDKFGIAGTVSTVEYDPYRNCRIALITYVDGEKRYILLPKGLNVGDAIIADATGVDIKPGNAMKLMNIPVGTSVHNIELKVGKGGQMVRSAGTSAQIMGRDGKYVSLRMPSSEMRLVLGECMATVGAVGNEEYINIVLGKAGRTRHMGIRPQTRGSAMNPIDHPHGGGEGKTNSGRHPVTPWGKPTKGSKTRRKKASDKLIITRRKSNPKR.

Residues 218 to 279 (RPQTRGSAMN…ITRRKSNPKR (62 aa)) form a disordered region. Residues 255–279 (KGSKTRRKKASDKLIITRRKSNPKR) are compositionally biased toward basic residues.

It belongs to the universal ribosomal protein uL2 family. In terms of assembly, part of the 50S ribosomal subunit. Forms a bridge to the 30S subunit in the 70S ribosome.

Functionally, one of the primary rRNA binding proteins. Required for association of the 30S and 50S subunits to form the 70S ribosome, for tRNA binding and peptide bond formation. It has been suggested to have peptidyltransferase activity; this is somewhat controversial. Makes several contacts with the 16S rRNA in the 70S ribosome. The polypeptide is Large ribosomal subunit protein uL2 (Sulfurimonas denitrificans (strain ATCC 33889 / DSM 1251) (Thiomicrospira denitrificans (strain ATCC 33889 / DSM 1251))).